The primary structure comprises 104 residues: Interferon alpha-inducible protein 27-like protein 1 (104 aa).

3 helical membrane passes run 14-34 (VAAV…LSAM), 59-79 (GGGV…AAGL), and 81-101 (VTSK…LGSP).

This sequence belongs to the IFI6/IFI27 family.

It localises to the membrane. In terms of biological role, plays a role in the apoptotic process and has a pro-apoptotic activity. The chain is Interferon alpha-inducible protein 27-like protein 1 from Homo sapiens (Human).